A 430-amino-acid polypeptide reads, in one-letter code: UDP-N-acetylmuramoylalanine--D-glutamate ligase (430 aa).

105-111 (GSNGKTT) lines the ATP pocket.

Belongs to the MurCDEF family.

It localises to the cytoplasm. It carries out the reaction UDP-N-acetyl-alpha-D-muramoyl-L-alanine + D-glutamate + ATP = UDP-N-acetyl-alpha-D-muramoyl-L-alanyl-D-glutamate + ADP + phosphate + H(+). Its pathway is cell wall biogenesis; peptidoglycan biosynthesis. Its function is as follows. Cell wall formation. Catalyzes the addition of glutamate to the nucleotide precursor UDP-N-acetylmuramoyl-L-alanine (UMA). This chain is UDP-N-acetylmuramoylalanine--D-glutamate ligase, found in Pseudothermotoga lettingae (strain ATCC BAA-301 / DSM 14385 / NBRC 107922 / TMO) (Thermotoga lettingae).